The primary structure comprises 505 residues: Maturase K (505 aa).

Belongs to the intron maturase 2 family. MatK subfamily.

The protein resides in the plastid. The protein localises to the chloroplast. Functionally, usually encoded in the trnK tRNA gene intron. Probably assists in splicing its own and other chloroplast group II introns. This is Maturase K from Blitum bonus-henricus (Good King Henry).